A 470-amino-acid polypeptide reads, in one-letter code: Suppressor of SWI4 1 homolog (470 aa).

The Brix domain maps to proline 29–asparagine 292. 2 positions are modified to phosphoserine: serine 238 and serine 240. Disordered stretches follow at residues serine 240–glutamine 264 and alanine 323–asparagine 470. Positions alanine 342–arginine 355 are enriched in basic residues. Serine 362 carries the post-translational modification Phosphoserine. At lysine 441 the chain carries N6-acetyllysine. Positions glutamine 447–alanine 457 are enriched in basic residues.

The protein resides in the nucleus. It is found in the nucleolus. May have a role in cell growth. This chain is Suppressor of SWI4 1 homolog (Ppan), found in Mus musculus (Mouse).